The sequence spans 376 residues: Deoxyuridine 5'-triphosphate nucleotidohydrolase (376 aa).

This sequence belongs to the dUTPase family. It depends on Mg(2+) as a cofactor.

The catalysed reaction is dUTP + H2O = dUMP + diphosphate + H(+). In terms of biological role, involved in nucleotide metabolism: produces dUMP, the immediate precursor of thymidine nucleotides and decreases the intracellular concentration of dUTP to avoid uracil incorporation into viral DNA. The protein is Deoxyuridine 5'-triphosphate nucleotidohydrolase of Homo sapiens (Human).